Reading from the N-terminus, the 510-residue chain is Cytochrome P450 monooxygenase AFLA_114810 (510 aa).

The N-terminal stretch at 1–17 (MLILLGLLCLYTGLYVA) is a signal peptide. Cys444 lines the heme pocket.

The protein belongs to the cytochrome P450 family. It depends on heme as a cofactor.

It functions in the pathway secondary metabolite biosynthesis. Functionally, cytochrome P450 monooxygenase; part of the gene cluster 41 that mediates the biosynthesis of an extracellular and diffusible metabolite that is able to stimulate colony sclerotial production. The protein is Cytochrome P450 monooxygenase AFLA_114810 of Aspergillus flavus (strain ATCC 200026 / FGSC A1120 / IAM 13836 / NRRL 3357 / JCM 12722 / SRRC 167).